Reading from the N-terminus, the 270-residue chain is Abhydrolase domain-containing protein C22H12.03 (270 aa).

One can recognise an AB hydrolase-1 domain in the interval 21 to 257 (PPVLIFHGLL…CGHWVHFEKP (237 aa)). Active-site charge relay system residues include Ser95, Glu190, and His250.

Belongs to the AB hydrolase superfamily.

Its subcellular location is the mitochondrion. The polypeptide is Abhydrolase domain-containing protein C22H12.03 (Schizosaccharomyces pombe (strain 972 / ATCC 24843) (Fission yeast)).